Here is a 337-residue protein sequence, read N- to C-terminus: MANSC domain-containing protein 4 (337 aa).

The first 18 residues, 1–18 (MRAVELLLLLGLASMVHG), serve as a signal peptide directing secretion. Topologically, residues 19–278 (LCSPTVFYRD…SSENEEPWDG (260 aa)) are extracellular. Positions 33–113 (RFPGMLLDLE…LEPGASAILY (81 aa)) constitute an MANSC domain. Residues Asn-114, Asn-227, and Asn-251 are each glycosylated (N-linked (GlcNAc...) asparagine). Composition is skewed to polar residues over residues 216-230 (SPSTDFTHSPGNKTI) and 239-260 (TRVSQVPSRSRLNISKPSVNKT). A disordered region spans residues 216-277 (SPSTDFTHSP…HSSENEEPWD (62 aa)). Residues 279–299 (APASAGVWLACVTLGAAVISL) traverse the membrane as a helical segment. At 300-337 (CCRVVLGTSRCCGKRQGWSHMGQRSASGCRRNTLKENS) the chain is on the cytoplasmic side. Positions 314 to 337 (RQGWSHMGQRSASGCRRNTLKENS) are disordered.

It localises to the membrane. This chain is MANSC domain-containing protein 4 (Mansc4), found in Mus musculus (Mouse).